The following is a 175-amino-acid chain: Thioredoxin M-type, chloroplastic (175 aa).

Residues 1 to 62 constitute a chloroplast transit peptide; it reads MALETCLRGW…ARRPSRFVCK (62 aa). The Thioredoxin domain occupies 63–174; sequence CKNVVDEVIV…LCTIIDKYIG (112 aa). A disulfide bond links Cys-98 and Cys-101.

It belongs to the thioredoxin family. Plant M-type subfamily. Forms a complex with heterodimeric ferredoxin-thioredoxin reductase (FTR) and ferredoxin.

The protein localises to the plastid. It is found in the chloroplast. Participates in various redox reactions through the reversible oxidation of the active center dithiol to a disulfide. The M form is known to activate NADP-malate dehydrogenase. The sequence is that of Thioredoxin M-type, chloroplastic from Triticum aestivum (Wheat).